The primary structure comprises 284 residues: Four and a half LIM domains protein 5 (284 aa).

The C4-type zinc-finger motif lies at 8-32 (CQYCTASLLGKKYVLKDDSLFCVTC). 4 consecutive LIM zinc-binding domains span residues 39–100 (NYCE…ECSS), 101–160 (KCFH…KEFA), 161–220 (HYCN…LYAN), and 223–283 (VACS…MDSD).

In terms of assembly, interacts with CREM (via the third LIM domain). Interacts (via second LIM domain) with SPAG8.

The protein resides in the nucleus. Its function is as follows. May be involved in the regulation of spermatogenesis. Stimulates CREM transcriptional activity in a phosphorylation-independent manner. This chain is Four and a half LIM domains protein 5 (FHL5), found in Macaca fascicularis (Crab-eating macaque).